A 169-amino-acid polypeptide reads, in one-letter code: Probable prefoldin subunit 3 (169 aa).

It belongs to the prefoldin subunit alpha family. Heterohexamer of two PFD-alpha type and four PFD-beta type subunits.

Functionally, binds specifically to cytosolic chaperonin (c-CPN) and transfers target proteins to it. Binds to nascent polypeptide chain and promotes folding in an environment in which there are many competing pathways for nonnative proteins. This Schizosaccharomyces pombe (strain 972 / ATCC 24843) (Fission yeast) protein is Probable prefoldin subunit 3.